Here is a 121-residue protein sequence, read N- to C-terminus: Ribosome-binding factor A (121 aa).

The protein belongs to the RbfA family. As to quaternary structure, monomer. Binds 30S ribosomal subunits, but not 50S ribosomal subunits or 70S ribosomes.

It localises to the cytoplasm. Functionally, one of several proteins that assist in the late maturation steps of the functional core of the 30S ribosomal subunit. Associates with free 30S ribosomal subunits (but not with 30S subunits that are part of 70S ribosomes or polysomes). Required for efficient processing of 16S rRNA. May interact with the 5'-terminal helix region of 16S rRNA. The protein is Ribosome-binding factor A of Clostridium tetani (strain Massachusetts / E88).